Consider the following 336-residue polypeptide: Ketol-acid reductoisomerase (NADP(+)) 1 (336 aa).

Residues 2–181 (AKVYYEKDVT…GATRAGVLET (180 aa)) enclose the KARI N-terminal Rossmann domain. NADP(+)-binding positions include 25-28 (YGSQ), arginine 48, serine 52, and 82-85 (DELQ). The active site involves histidine 107. NADP(+) is bound at residue glycine 133. The KARI C-terminal knotted domain maps to 182–327 (TFKEETETDL…RKLRGMMPFV (146 aa)). Mg(2+) is bound by residues aspartate 190, glutamate 194, glutamate 226, and glutamate 230. A substrate-binding site is contributed by serine 251.

This sequence belongs to the ketol-acid reductoisomerase family. The cofactor is Mg(2+).

The enzyme catalyses (2R)-2,3-dihydroxy-3-methylbutanoate + NADP(+) = (2S)-2-acetolactate + NADPH + H(+). The catalysed reaction is (2R,3R)-2,3-dihydroxy-3-methylpentanoate + NADP(+) = (S)-2-ethyl-2-hydroxy-3-oxobutanoate + NADPH + H(+). The protein operates within amino-acid biosynthesis; L-isoleucine biosynthesis; L-isoleucine from 2-oxobutanoate: step 2/4. It participates in amino-acid biosynthesis; L-valine biosynthesis; L-valine from pyruvate: step 2/4. In terms of biological role, involved in the biosynthesis of branched-chain amino acids (BCAA). Catalyzes an alkyl-migration followed by a ketol-acid reduction of (S)-2-acetolactate (S2AL) to yield (R)-2,3-dihydroxy-isovalerate. In the isomerase reaction, S2AL is rearranged via a Mg-dependent methyl migration to produce 3-hydroxy-3-methyl-2-ketobutyrate (HMKB). In the reductase reaction, this 2-ketoacid undergoes a metal-dependent reduction by NADPH to yield (R)-2,3-dihydroxy-isovalerate. The sequence is that of Ketol-acid reductoisomerase (NADP(+)) 1 from Bacillus anthracis.